Consider the following 884-residue polypeptide: DNA mismatch repair protein MutS (884 aa).

An ATP-binding site is contributed by 643 to 650; sequence GPNMGGKS.

This sequence belongs to the DNA mismatch repair MutS family.

Its function is as follows. This protein is involved in the repair of mismatches in DNA. It is possible that it carries out the mismatch recognition step. This protein has a weak ATPase activity. In Methylobacillus flagellatus (strain ATCC 51484 / DSM 6875 / VKM B-1610 / KT), this protein is DNA mismatch repair protein MutS.